The sequence spans 372 residues: Queuine tRNA-ribosyltransferase (372 aa).

Residue D92 is the Proton acceptor of the active site. Substrate contacts are provided by residues 92–96 (DSGGF), D146, Q188, and G215. The RNA binding stretch occupies residues 246–252 (GIGTLRE). The active-site Nucleophile is D265. The interval 270 to 274 (TRLGR) is RNA binding; important for wobble base 34 recognition. Zn(2+)-binding residues include C303, C305, C308, and H334.

Belongs to the queuine tRNA-ribosyltransferase family. Homodimer. Within each dimer, one monomer is responsible for RNA recognition and catalysis, while the other monomer binds to the replacement base PreQ1. The cofactor is Zn(2+).

The enzyme catalyses 7-aminomethyl-7-carbaguanine + guanosine(34) in tRNA = 7-aminomethyl-7-carbaguanosine(34) in tRNA + guanine. It functions in the pathway tRNA modification; tRNA-queuosine biosynthesis. In terms of biological role, catalyzes the base-exchange of a guanine (G) residue with the queuine precursor 7-aminomethyl-7-deazaguanine (PreQ1) at position 34 (anticodon wobble position) in tRNAs with GU(N) anticodons (tRNA-Asp, -Asn, -His and -Tyr). Catalysis occurs through a double-displacement mechanism. The nucleophile active site attacks the C1' of nucleotide 34 to detach the guanine base from the RNA, forming a covalent enzyme-RNA intermediate. The proton acceptor active site deprotonates the incoming PreQ1, allowing a nucleophilic attack on the C1' of the ribose to form the product. After dissociation, two additional enzymatic reactions on the tRNA convert PreQ1 to queuine (Q), resulting in the hypermodified nucleoside queuosine (7-(((4,5-cis-dihydroxy-2-cyclopenten-1-yl)amino)methyl)-7-deazaguanosine). The protein is Queuine tRNA-ribosyltransferase of Prochlorococcus marinus (strain MIT 9303).